We begin with the raw amino-acid sequence, 142 residues long: ATP synthase epsilon chain (142 aa).

Belongs to the ATPase epsilon chain family. In terms of assembly, F-type ATPases have 2 components, CF(1) - the catalytic core - and CF(0) - the membrane proton channel. CF(1) has five subunits: alpha(3), beta(3), gamma(1), delta(1), epsilon(1). CF(0) has three main subunits: a, b and c.

It localises to the cell inner membrane. Produces ATP from ADP in the presence of a proton gradient across the membrane. This Mannheimia succiniciproducens (strain KCTC 0769BP / MBEL55E) protein is ATP synthase epsilon chain.